Reading from the N-terminus, the 42-residue chain is Large ribosomal subunit protein bL36 (42 aa).

It belongs to the bacterial ribosomal protein bL36 family.

This chain is Large ribosomal subunit protein bL36, found in Ehrlichia canis (strain Jake).